A 166-amino-acid polypeptide reads, in one-letter code: Minor capsid protein VP2 (166 aa).

The tract at residues 138–166 (PAPSGFVNPNYQPSPPRLKLGPRPPSTNV) is disordered. Positions 149–166 (QPSPPRLKLGPRPPSTNV) are enriched in pro residues.

The protein belongs to the vesivirus VP2 protein family. In terms of assembly, homooligomer. The portal-like structure consists in 12 copies of VP2. Interacts with capsid protein VP1.

The protein localises to the virion. It is found in the host cytoplasm. Functionally, minor structural protein that forms a portal-like structure at a unique three-fold axis of symmetry, following binding to the host receptor. The channel formed by VP2 may allow the delivery of the viral genome through the host endosomal membrane. The chain is Minor capsid protein VP2 from Homo sapiens (Human).